Reading from the N-terminus, the 152-residue chain is Aspartate carbamoyltransferase regulatory chain (152 aa).

Residues C109, C114, C138, and C141 each contribute to the Zn(2+) site.

The protein belongs to the PyrI family. In terms of assembly, contains catalytic and regulatory chains. Requires Zn(2+) as cofactor.

In terms of biological role, involved in allosteric regulation of aspartate carbamoyltransferase. The protein is Aspartate carbamoyltransferase regulatory chain of Proteus mirabilis (strain HI4320).